The sequence spans 902 residues: 4-hydroxyphenylacetate decarboxylase glycyl radical subunit (902 aa).

One can recognise a PFL domain in the interval 38–774 (KRAEDLLDVY…ATLATPDGRL (737 aa)). Residues S348 and C507 each coordinate 4-hydroxyphenylacetate. The Cysteine radical intermediate role is filled by C507. The active-site Proton donor is the E509. 2 residues coordinate 4-hydroxyphenylacetate: H540 and E641. The Glycine radical domain maps to 782–902 (GSVSAYAGTD…VIARTEYEGV (121 aa)). G877 is subject to Glycine radical.

It belongs to the glycyl radical enzyme (GRE) family. HPAD subfamily. As to quaternary structure, heterooctamer consisting of 4 large (HpdB) subunits and 4 small (HpdC) subunits, arranged as a tetramer of heterodimers. Also forms a catalytically inactive homodimer. Post-translationally, requires the activating protein CsdA to generate the key active site glycyl radical that is involved in catalysis. Phosphorylated on serine. Phosphorylation may trigger the formation of the active heterooctamers and thereby regulates enzyme activity.

It catalyses the reaction 4-hydroxyphenylacetate + H(+) = 4-methylphenol + CO2. The enzyme catalyses 3,4-dihydroxyphenylacetate + H(+) = 4-methylcatechol + CO2. Glycyl radical subunit of the HPA decarboxylase that decarboxylates phenylacetates with a hydroxyl group in the p-position. Active toward 4-hydroxyphenylacetate and 3,4-dihydroxyphenylacetate, forming 4-methylphenol and 4-methylcatechol, respectively. Is likely involved in the catabolism of aromatic amino acids such as tyrosine fermentation. 4-methylphenol (p-cresol) formation provides metabolic toxicity, which allows an active suppression of other microbes and may provide growth advantages for the producers in highly competitive environments. The large subunit is the catalytic subunit that binds the substrate. This chain is 4-hydroxyphenylacetate decarboxylase glycyl radical subunit, found in Clostridioides difficile (strain CD196) (Peptoclostridium difficile).